The chain runs to 149 residues: Lymphocyte antigen 6 complex locus protein G5c (149 aa).

An N-terminal signal peptide occupies residues 1-41 (MLFMAGPAASWSLRPLGLHGVPQALCAVLLTVLVMKTLVLG). In terms of domain architecture, UPAR/Ly6 spans 59–149 (LNCYRCLLET…NPDNRKNSMH (91 aa)). Cystine bridges form between Cys-61-Cys-88, Cys-64-Cys-73, Cys-80-Cys-106, Cys-115-Cys-132, and Cys-133-Cys-138. Residue Asn-95 is glycosylated (N-linked (GlcNAc...) asparagine).

Forms oligomers. In terms of processing, N-glycosylated. In terms of tissue distribution, detected in adult brain.

The protein resides in the secreted. May have a role in hematopoietic cell differentiation. In Mus musculus (Mouse), this protein is Lymphocyte antigen 6 complex locus protein G5c (Ly6g5c).